We begin with the raw amino-acid sequence, 416 residues long: CinA-like protein (416 aa).

The protein belongs to the CinA family.

In Rippkaea orientalis (strain PCC 8801 / RF-1) (Cyanothece sp. (strain PCC 8801)), this protein is CinA-like protein.